The sequence spans 890 residues: UPF0182 protein Ppro_2689 (890 aa).

Helical transmembrane passes span 6 to 26 (FILI…LLAF), 50 to 70 (AGSG…NLLL), 102 to 122 (LGIP…AMQW), 157 to 177 (TITA…VLVY), 200 to 220 (LAIL…LDCF), 244 to 264 (TYRI…IGLW), and 266 to 286 (GAWR…VIGI).

The protein belongs to the UPF0182 family.

The protein localises to the cell membrane. The protein is UPF0182 protein Ppro_2689 of Pelobacter propionicus (strain DSM 2379 / NBRC 103807 / OttBd1).